The primary structure comprises 688 residues: Eukaryotic translation initiation factor 3 subunit B (688 aa).

The interval 1–32 (MAKKKGENYDSDGGDDQDYDEEPNFDDPEGFV) is disordered. Acidic residues predominate over residues 9–32 (YDSDGGDDQDYDEEPNFDDPEGFV). The RRM domain occupies 57–141 (NVIVVDNIPV…HTLLVNLFSD (85 aa)). WD repeat units follow at residues 208–246 (RDRF…KINK), 247–287 (FPHS…EKRS), 291–329 (DGTS…LLDK), 332–367 (IKVQ…TLLE), 440–482 (EVKE…EPTM), and 527–572 (GDHF…KRVN). A coiled-coil region spans residues 613–642 (RIRMTRASKELLEKRAKLREQFVEYRTKRV).

The protein belongs to the eIF-3 subunit B family. As to quaternary structure, component of the eukaryotic translation initiation factor 3 (eIF-3) complex.

The protein localises to the cytoplasm. In terms of biological role, RNA-binding component of the eukaryotic translation initiation factor 3 (eIF-3) complex, which is involved in protein synthesis of a specialized repertoire of mRNAs and, together with other initiation factors, stimulates binding of mRNA and methionyl-tRNAi to the 40S ribosome. The eIF-3 complex specifically targets and initiates translation of a subset of mRNAs involved in cell proliferation. The polypeptide is Eukaryotic translation initiation factor 3 subunit B (Aedes aegypti (Yellowfever mosquito)).